We begin with the raw amino-acid sequence, 500 residues long: POU domain, class 3, transcription factor 3 (500 aa).

The span at 32–52 (GGGGGGGGGGGGAGGGGGGMQ) shows a compositional bias: gly residues. Disordered stretches follow at residues 32–63 (GGGGGGGGGGGGAGGGGGGMQPGSAAVTSGAY), 122–190 (WSGS…WGAA), 231–319 (NGML…TPTS), and 461–500 (EKRMTPPGIQQQTPDDVYSQVGTVSADTPPPHHGLQTSVQ). Pro residues-rich tracts occupy residues 134-146 (QQPPQPPPPPPQG) and 171-181 (HLGPPPPPPHQ). Residues 241–251 (GGGGGGAGGGA) show a composition bias toward gly residues. Positions 270–287 (HHHHHHHHAHPHPPHPHH) are enriched in basic residues. The span at 293–303 (HHGGGGGGAGP) shows a compositional bias: gly residues. A POU-specific domain is found at 314–388 (EDTPTSDDLE…LLNKWLEEAD (75 aa)). The segment at residues 406–465 (KRKKRTSIEVSVKGALESHFLKCPKPSAQEITNLADSLQLEKEVVRVWFCNRRQKEKRMT) is a DNA-binding region (homeobox). Positions 468–486 (GIQQQTPDDVYSQVGTVSA) are enriched in polar residues.

It belongs to the POU transcription factor family. Class-3 subfamily. In terms of assembly, homodimer. Brain.

It is found in the nucleus. Functionally, transcription factor that acts synergistically with SOX11 and SOX4. Plays a role in neuronal development. Is implicated in an enhancer activity at the embryonic met-mesencephalic junction; the enhancer element contains the octamer motif (5'-ATTTGCAT-3'). The polypeptide is POU domain, class 3, transcription factor 3 (Homo sapiens (Human)).